A 637-amino-acid polypeptide reads, in one-letter code: 1-deoxy-D-xylulose-5-phosphate synthase (637 aa).

Residues His76 and 117 to 119 (GHS) each bind thiamine diphosphate. Asp148 is a Mg(2+) binding site. Thiamine diphosphate-binding positions include 149–150 (GA), Asn177, Tyr294, and Glu381. Mg(2+) is bound at residue Asn177.

This sequence belongs to the transketolase family. DXPS subfamily. As to quaternary structure, homodimer. Requires Mg(2+) as cofactor. The cofactor is thiamine diphosphate.

The catalysed reaction is D-glyceraldehyde 3-phosphate + pyruvate + H(+) = 1-deoxy-D-xylulose 5-phosphate + CO2. The protein operates within metabolic intermediate biosynthesis; 1-deoxy-D-xylulose 5-phosphate biosynthesis; 1-deoxy-D-xylulose 5-phosphate from D-glyceraldehyde 3-phosphate and pyruvate: step 1/1. In terms of biological role, catalyzes the acyloin condensation reaction between C atoms 2 and 3 of pyruvate and glyceraldehyde 3-phosphate to yield 1-deoxy-D-xylulose-5-phosphate (DXP). The sequence is that of 1-deoxy-D-xylulose-5-phosphate synthase from Neisseria gonorrhoeae (strain ATCC 700825 / FA 1090).